An 80-amino-acid chain; its full sequence is Raniseptin-5 (80 aa).

Positions 1-22 are cleaved as a signal peptide; sequence MAFLKKSLFLVLFLGIVSLSIC. Residues 23–49 constitute a propeptide that is removed on maturation; the sequence is EEEKREGEEEEKQEEENEELSEEELRE.

The protein belongs to the frog skin active peptide (FSAP) family. Dermaseptin subfamily. Expressed by the skin glands.

It localises to the secreted. Has antibacterial activity. This chain is Raniseptin-5, found in Boana raniceps (Chaco tree frog).